The chain runs to 350 residues: Leucine-rich repeat-containing protein 23 (350 aa).

A compositionally biased stretch (acidic residues) spans 1–54 (MEDETLEDGPEEEEEDEEEGTAEETNQDVTERDEEEEAEKDEEEDKEEEEEAEK). Residues 1 to 64 (MEDETLEDGP…EEPPPHMPLS (64 aa)) form a disordered region. 8 LRR repeats span residues 107-128 (HLRY…GALT), 129-150 (HLLS…GELP), 151-171 (YLQV…FGHP), 172-193 (RLET…ECSN), 196-216 (SLHT…LNLP), 217-238 (SLRE…EALV), 239-260 (NLTT…SEHL), and 262-283 (ALQY…QKLY). The region spanning 296–334 (NPCEEEEGYRMETLIALPQLERLDKDFFEEEEKREAAET) is the LRRCT domain. Positions 314–344 (QLERLDKDFFEEEEKREAAETKKAREEEMAE) form a coiled coil. The segment at 325–350 (EEEKREAAETKKAREEEMAEPGEKGN) is disordered.

It localises to the cytoplasm. The protein localises to the cytoskeleton. The protein resides in the flagellum axoneme. The protein is Leucine-rich repeat-containing protein 23 (lrrc23) of Xenopus tropicalis (Western clawed frog).